The chain runs to 201 residues: Small ribosomal subunit protein uS4c (201 aa).

Positions 20–44 (GLTSKRPTVGSELRNQSRSTKKSQY) are disordered. The S4 RNA-binding domain maps to 89–150 (MRLDNILFRL…NKKSKTLIQN (62 aa)).

It belongs to the universal ribosomal protein uS4 family. In terms of assembly, part of the 30S ribosomal subunit. Contacts protein S5. The interaction surface between S4 and S5 is involved in control of translational fidelity.

It localises to the plastid. The protein localises to the chloroplast. Functionally, one of the primary rRNA binding proteins, it binds directly to 16S rRNA where it nucleates assembly of the body of the 30S subunit. In terms of biological role, with S5 and S12 plays an important role in translational accuracy. This is Small ribosomal subunit protein uS4c (rps4) from Lotus japonicus (Lotus corniculatus var. japonicus).